A 150-amino-acid polypeptide reads, in one-letter code: SsrA-binding protein (150 aa).

The protein belongs to the SmpB family.

Its subcellular location is the cytoplasm. In terms of biological role, required for rescue of stalled ribosomes mediated by trans-translation. Binds to transfer-messenger RNA (tmRNA), required for stable association of tmRNA with ribosomes. tmRNA and SmpB together mimic tRNA shape, replacing the anticodon stem-loop with SmpB. tmRNA is encoded by the ssrA gene; the 2 termini fold to resemble tRNA(Ala) and it encodes a 'tag peptide', a short internal open reading frame. During trans-translation Ala-aminoacylated tmRNA acts like a tRNA, entering the A-site of stalled ribosomes, displacing the stalled mRNA. The ribosome then switches to translate the ORF on the tmRNA; the nascent peptide is terminated with the 'tag peptide' encoded by the tmRNA and targeted for degradation. The ribosome is freed to recommence translation, which seems to be the essential function of trans-translation. The protein is SsrA-binding protein of Magnetococcus marinus (strain ATCC BAA-1437 / JCM 17883 / MC-1).